The sequence spans 330 residues: Transcription factor TGA6 (330 aa).

Over residues M1–D13 the composition is skewed to polar residues. The segment at M1–Q45 is disordered. Basic and acidic residues-rich tracts occupy residues D15 to H27 and S35 to Q45. In terms of domain architecture, bZIP spans D44–G107. Coiled-coil stretches lie at residues Q45–D142 and I217–Q233. The segment at K46–K66 is basic motif. A leucine-zipper region spans residues L72–L86. One can recognise a DOG1 domain in the interval A111–R327.

It belongs to the bZIP family. In terms of assembly, binds DNA as a dimer. Interacts with NPR1, NPR3 and NPR4. Interacts with GRXC9/GRX480. In terms of tissue distribution, expressed predominantly in roots and flowers.

It localises to the nucleus. Transcriptional activator that binds specifically to the DNA sequence 5'-TGACG-3'. Recognizes ocs elements like the as-1 motif of the cauliflower mosaic virus 35S promoter. Binding to the as-1-like cis elements mediate auxin- and salicylic acid-inducible transcription. May be involved in the induction of the systemic acquired resistance (SAR) via its interaction with NPR1. Could also bind to the Hex-motif (5'-TGACGTGG-3') another cis-acting element found in plant histone promoters. The protein is Transcription factor TGA6 (TGA6) of Arabidopsis thaliana (Mouse-ear cress).